The chain runs to 3431 residues: KICSTOR complex protein SZT2 (3431 aa).

3 disordered regions span residues 699-731 (SKEP…PQQA), 1067-1101 (LRDP…TLPS), and 1162-1231 (KPKL…GADG). The interval 1082-1188 (VAKDRAGNST…ATGTKATESQ (107 aa)) is mediates interaction with the GATOR1 complex. Composition is skewed to polar residues over residues 1088-1101 (GNST…TLPS) and 1182-1212 (TKAT…TPSC). Residue Ser-1275 is modified to Phosphoserine. Residues 1356–1378 (PPSPGPLSPGPFSSSIEEGPEPR) are disordered. At Ser-1415 the chain carries Phosphoserine. Disordered regions lie at residues 1512 to 1534 (YRES…SDAD), 1629 to 1678 (PPAS…HPGL), 1806 to 1883 (RAED…PGET), 2113 to 2148 (PPSL…SDAV), 2450 to 2512 (TEAG…LEEG), 2735 to 2756 (ASPP…GGPL), and 2866 to 2899 (ETCA…DVPP). Phosphothreonine is present on Thr-1640. Residues 1641-1657 (SESSASFPRSPGQPSSL) are compositionally biased toward polar residues. Position 1650 is a phosphoserine (Ser-1650). Low complexity predominate over residues 1832 to 1854 (PLISLPSLSQGGSQPGPSRGLSL). Over residues 2118-2129 (LSRSQEPISSED) the composition is skewed to polar residues. A compositionally biased stretch (basic and acidic residues) spans 2460–2473 (TTDDIVLDRPEDTR). Residues 2739 to 2749 (LSREQGRLSGS) are compositionally biased toward low complexity.

Part of the KICSTOR complex composed of KPTN, ITFG2, KICS2 and SZT2. SZT2 probably serves as a link between the other three proteins in the KICSTOR complex and may mediate the direct interaction with the GATOR complex via GATOR1. The KICSTOR complex interacts directly with the GATOR1 complex and most probably indirectly with the GATOR2 complex in an amino acid-independent manner. In terms of tissue distribution, mostly expressed in brain, spinal cord and lung.

The protein localises to the lysosome membrane. The protein resides in the peroxisome. In terms of biological role, as part of the KICSTOR complex functions in the amino acid-sensing branch of the TORC1 signaling pathway. Recruits, in an amino acid-independent manner, the GATOR1 complex to the lysosomal membranes and allows its interaction with GATOR2 and the RAG GTPases. Functions upstream of the RAG GTPases and is required to negatively regulate mTORC1 signaling in absence of amino acids. In absence of the KICSTOR complex mTORC1 is constitutively localized to the lysosome and activated. The KICSTOR complex is also probably involved in the regulation of mTORC1 by glucose. May play a role in the cellular response to oxidative stress. This is KICSTOR complex protein SZT2 from Mus musculus (Mouse).